Reading from the N-terminus, the 150-residue chain is UPF0756 membrane protein HI_1074 (150 aa).

Helical transmembrane passes span 1 to 21 (MTLQ…LGVL), 52 to 72 (YGVK…LVSG), 81 to 101 (GFLS…AWLA), and 123 to 143 (IIGV…AGIL).

The protein belongs to the UPF0756 family.

It localises to the cell membrane. This is UPF0756 membrane protein HI_1074 from Haemophilus influenzae (strain ATCC 51907 / DSM 11121 / KW20 / Rd).